The chain runs to 115 residues: Large ribosomal subunit protein bL19 (115 aa).

This sequence belongs to the bacterial ribosomal protein bL19 family.

In terms of biological role, this protein is located at the 30S-50S ribosomal subunit interface and may play a role in the structure and function of the aminoacyl-tRNA binding site. In Wigglesworthia glossinidia brevipalpis, this protein is Large ribosomal subunit protein bL19.